Reading from the N-terminus, the 228-residue chain is Endonuclease V (228 aa).

The Mg(2+) site is built by Asp-43 and Asp-109.

The protein belongs to the endonuclease V family. Requires Mg(2+) as cofactor.

The protein localises to the cytoplasm. It catalyses the reaction Endonucleolytic cleavage at apurinic or apyrimidinic sites to products with a 5'-phosphate.. In terms of biological role, DNA repair enzyme involved in the repair of deaminated bases. Selectively cleaves double-stranded DNA at the second phosphodiester bond 3' to a deoxyinosine leaving behind the intact lesion on the nicked DNA. The chain is Endonuclease V from Dictyoglomus turgidum (strain DSM 6724 / Z-1310).